A 193-amino-acid chain; its full sequence is MAKKQSILSPIIRITFTFLVLCGLVYPLIVTGIAQAVMKDNADGSLIYNDKNEVIGSKLIGQNFTDPRYFHGRVSSIEYKAEASGSNNYAPSNPDLEKRVEKSIEEWKKQNPSVPVTEVPIDLVTNSGSGLDPDISPKAASVQVERISKITNIPKETLNQLIKEQTEGAALGLFGENRVNVLKLNLELQKLLK.

A helical membrane pass occupies residues 14-34 (ITFTFLVLCGLVYPLIVTGIA).

It belongs to the KdpC family. In terms of assembly, the system is composed of three essential subunits: KdpA, KdpB and KdpC.

It is found in the cell membrane. Part of the high-affinity ATP-driven potassium transport (or Kdp) system, which catalyzes the hydrolysis of ATP coupled with the electrogenic transport of potassium into the cytoplasm. This subunit acts as a catalytic chaperone that increases the ATP-binding affinity of the ATP-hydrolyzing subunit KdpB by the formation of a transient KdpB/KdpC/ATP ternary complex. This chain is Potassium-transporting ATPase KdpC subunit, found in Bacillus cereus (strain Q1).